A 150-amino-acid polypeptide reads, in one-letter code: Endoribonuclease YbeY (150 aa).

Zn(2+)-binding residues include His102, His106, and His112.

It belongs to the endoribonuclease YbeY family. It depends on Zn(2+) as a cofactor.

The protein resides in the cytoplasm. Functionally, single strand-specific metallo-endoribonuclease involved in late-stage 70S ribosome quality control and in maturation of the 3' terminus of the 16S rRNA. This chain is Endoribonuclease YbeY, found in Thermotoga maritima (strain ATCC 43589 / DSM 3109 / JCM 10099 / NBRC 100826 / MSB8).